A 251-amino-acid chain; its full sequence is Tail tip protein L (251 aa).

Positions 184, 198, 221, and 228 each coordinate [4Fe-4S] cluster.

This sequence belongs to the lambda-like tail tip protein L family. The cofactor is [4Fe-4S] cluster.

The protein localises to the virion. It is found in the host cytoplasm. Functionally, part of the distal tail tip complex which plays a role in DNA injection during entry, and in tail assembly initiation during exit. The tail tip complex is assembled successively with three tail central fiber proteins J, one tail tip protein I, one tail tip protein L and one tail tip protein K. The tail tip complex interacts with tail measure protein to initiate tail tube assembly. The formation of the tail tip complex is completed by the addition of tail tip protein M, which is followed by tail tube polymerization. The protein is Tail tip protein L of Escherichia phage N15 (Bacteriophage N15).